The primary structure comprises 61 residues: Large ribosomal subunit protein uL29 (61 aa).

It belongs to the universal ribosomal protein uL29 family.

The sequence is that of Large ribosomal subunit protein uL29 from Nitratidesulfovibrio vulgaris (strain DSM 19637 / Miyazaki F) (Desulfovibrio vulgaris).